A 229-amino-acid chain; its full sequence is uncharacterized protein (229 aa).

This is an uncharacterized protein from Methanocaldococcus jannaschii (strain ATCC 43067 / DSM 2661 / JAL-1 / JCM 10045 / NBRC 100440) (Methanococcus jannaschii).